Reading from the N-terminus, the 476-residue chain is UDP-N-acetylmuramate--L-alanine ligase (476 aa).

115–121 (GTHGKTT) provides a ligand contact to ATP.

The protein belongs to the MurCDEF family.

Its subcellular location is the cytoplasm. It carries out the reaction UDP-N-acetyl-alpha-D-muramate + L-alanine + ATP = UDP-N-acetyl-alpha-D-muramoyl-L-alanine + ADP + phosphate + H(+). The protein operates within cell wall biogenesis; peptidoglycan biosynthesis. In terms of biological role, cell wall formation. This Paramagnetospirillum magneticum (strain ATCC 700264 / AMB-1) (Magnetospirillum magneticum) protein is UDP-N-acetylmuramate--L-alanine ligase.